A 142-amino-acid polypeptide reads, in one-letter code: Transcriptional regulator MraZ (142 aa).

2 SpoVT-AbrB domains span residues 5-51 and 77-120; these read ASSL…PRPE and AMDV…DKAT.

This sequence belongs to the MraZ family. Forms oligomers.

The protein localises to the cytoplasm. It localises to the nucleoid. This Variovorax paradoxus (strain S110) protein is Transcriptional regulator MraZ.